We begin with the raw amino-acid sequence, 181 residues long: Adenine phosphoribosyltransferase (181 aa).

Belongs to the purine/pyrimidine phosphoribosyltransferase family. As to quaternary structure, homodimer.

The protein localises to the cytoplasm. It carries out the reaction AMP + diphosphate = 5-phospho-alpha-D-ribose 1-diphosphate + adenine. Its pathway is purine metabolism; AMP biosynthesis via salvage pathway; AMP from adenine: step 1/1. In terms of biological role, catalyzes a salvage reaction resulting in the formation of AMP, that is energically less costly than de novo synthesis. In Chromohalobacter salexigens (strain ATCC BAA-138 / DSM 3043 / CIP 106854 / NCIMB 13768 / 1H11), this protein is Adenine phosphoribosyltransferase.